A 605-amino-acid polypeptide reads, in one-letter code: Protein kinase wis1 (605 aa).

The span at 1-20 (MSSPNNQPLSCSLRQLSISP) shows a compositional bias: polar residues. The interval 1–141 (MSSPNNQPLS…TPPGPFPGGL (141 aa)) is disordered. Low complexity-rich tracts occupy residues 31 to 73 (GSLL…SSPS) and 90 to 105 (RLGR…SLNL). The segment covering 106–115 (DMKDPSEKPR) has biased composition (basic and acidic residues). At S168 the chain carries Phosphoserine. A compositionally biased stretch (polar residues) spans 188–200 (SQLAGRLSNSPVK). The interval 188 to 263 (SQLAGRLSNS…PSSMASRRGL (76 aa)) is disordered. Over residues 244 to 256 (SNSNPTSPVSPSS) the composition is skewed to low complexity. Residue S253 is modified to Phosphoserine. Residues 320–579 (IIKLEELGKG…YHELANHPWL (260 aa)) enclose the Protein kinase domain. Residues 326-334 (LGKGNYGVV) and K349 each bind ATP. Catalysis depends on D441, which acts as the Proton acceptor. S469 is subject to Phosphoserine. T473 carries the post-translational modification Phosphothreonine.

It belongs to the protein kinase superfamily. STE Ser/Thr protein kinase family. MAP kinase kinase subfamily. In terms of processing, dephosphorylated by pyp1 and pyp2.

The catalysed reaction is L-seryl-[protein] + ATP = O-phospho-L-seryl-[protein] + ADP + H(+). The enzyme catalyses L-threonyl-[protein] + ATP = O-phospho-L-threonyl-[protein] + ADP + H(+). It carries out the reaction L-tyrosyl-[protein] + ATP = O-phospho-L-tyrosyl-[protein] + ADP + H(+). Dosage-dependent regulator of mitosis with serine/ threonine protein kinase activity. May play a role in the integration of nutritional sensing with the control over entry into mitosis. It may interact with cdc25, wee1 and win1. May activate sty1. The chain is Protein kinase wis1 (wis1) from Schizosaccharomyces pombe (strain 972 / ATCC 24843) (Fission yeast).